The following is a 143-amino-acid chain: Putative 2'-deoxynucleoside 5'-phosphate N-hydrolase 1 (143 aa).

Substrate-binding positions include H37, E82, and 106–108 (SAM).

It belongs to the 2'-deoxynucleoside 5'-phosphate N-hydrolase 1 family. As to quaternary structure, monomer and homodimer.

The catalysed reaction is a pyrimidine 2'-deoxyribonucleoside 5'-phosphate + H2O = a pyrimidine nucleobase + 2-deoxy-D-ribose 5-phosphate. The enzyme catalyses a purine 2'-deoxyribonucleoside 5'-phosphate + H2O = a purine nucleobase + 2-deoxy-D-ribose 5-phosphate. In terms of biological role, catalyzes the cleavage of the N-glycosidic bond of deoxyribonucleoside 5'-monophosphates to yield deoxyribose 5-phosphate and a purine or pyrimidine base. The chain is Putative 2'-deoxynucleoside 5'-phosphate N-hydrolase 1 from Thermofilum pendens (strain DSM 2475 / Hrk 5).